The sequence spans 858 residues: Respiratory burst oxidase homolog protein D (858 aa).

Over residues 1-13 (MQNPEDHHSDREL) the composition is skewed to basic and acidic residues. The interval 1–27 (MQNPEDHHSDRELSSPSNTTKSNDDKN) is disordered. The Cytoplasmic segment spans residues 1-318 (MQNPEDHHSD…KYFLLDNWRR (318 aa)). EF-hand-like regions lie at residues 134-144 (TATSDSLLPRA) and 171-182 (RNITSGCISKEQ). EF-hand domains lie at 194-229 (SFDS…SASA) and 238-273 (QAAE…APIQ). Positions 207, 209, 211, 213, and 218 each coordinate Ca(2+). A helical membrane pass occupies residues 319 to 339 (VWVLLLWIGVMAGLFAYKYVQ). Residues 340–351 (YKNKAAFNVMGH) are Extracellular-facing. A helical transmembrane segment spans residues 352-372 (CVCVAKGAAEVLKLNMALILL). One can recognise a Ferric oxidoreductase domain in the interval 357 to 514 (KGAAEVLKLN…LFVIVYSLLI (158 aa)). Topologically, residues 373–397 (PVCRNTITWLRNKTKLGGAVPFDDN) are cytoplasmic. The chain crosses the membrane as a helical span at residues 398–418 (INFHKVVAGAIAVGVGIHVLA). The Extracellular portion of the chain corresponds to 419–454 (HMTCDFPRLLNASPEKYKPMEPYFGDQPRNYWHFVK). The helical transmembrane segment at 455-475 (GVEGVSGIIMVVLMSIAFTLA) threads the bilayer. Residues 476-497 (SQRFRRNKIRLPRPLNKLTGFN) lie on the Cytoplasmic side of the membrane. A helical membrane pass occupies residues 498–518 (AFWYSHHLFVIVYSLLIVHGI). The Extracellular segment spans residues 519–675 (ELYLTKEWYK…APAQDYKEYE (157 aa)). The 123-residue stretch at 548 to 670 (LRAFRSSVKD…DGPYGAPAQD (123 aa)) folds into the FAD-binding FR-type domain. Residues 676–696 (VLLLVGLGIGATPMISIVKDI) form a helical membrane-spanning segment. Residues 697–858 (VNNMKEEKYD…TKFDFHKENF (162 aa)) lie on the Cytoplasmic side of the membrane.

It belongs to the RBOH (TC 5.B.1.3) family. As to quaternary structure, monomer and homodimer. In terms of processing, phosphorylated by CPK. As to expression, expressed in leaves.

The protein localises to the membrane. Its function is as follows. Calcium-dependent NADPH oxidase that generates superoxide. May be responsible for the oxidative burst in response to pathogen attack in the leaves. In Solanum tuberosum (Potato), this protein is Respiratory burst oxidase homolog protein D (RBOHD).